Consider the following 450-residue polypeptide: UDP-N-acetylmuramoylalanine--D-glutamate ligase (450 aa).

119–125 provides a ligand contact to ATP; that stretch reads GSNGKTT.

Belongs to the MurCDEF family.

It localises to the cytoplasm. It catalyses the reaction UDP-N-acetyl-alpha-D-muramoyl-L-alanine + D-glutamate + ATP = UDP-N-acetyl-alpha-D-muramoyl-L-alanyl-D-glutamate + ADP + phosphate + H(+). Its pathway is cell wall biogenesis; peptidoglycan biosynthesis. Cell wall formation. Catalyzes the addition of glutamate to the nucleotide precursor UDP-N-acetylmuramoyl-L-alanine (UMA). The protein is UDP-N-acetylmuramoylalanine--D-glutamate ligase of Bacillus cereus (strain B4264).